The sequence spans 1248 residues: Structural maintenance of chromosomes protein 1B (1248 aa).

32-39 (GPNGSGKS) contacts ATP. A coiled-coil region spans residues 163–502 (EFIGEYEAKK…EGKRQQKRAE (340 aa)). Positions 514–629 (SVFGRLLDLC…ETVEEARHIA (116 aa)) constitute an SMC hinge domain. N6-acetyllysine is present on residues Lys-648, Lys-713, and Lys-1032. A coiled-coil region spans residues 666 to 912 (WDEKELHNLR…REVGKLQKEV (247 aa)). Positions 1219-1228 (PDTEDQEGSR) are enriched in basic and acidic residues. The segment at 1219-1248 (PDTEDQEGSRSHRKPRVPRVSMSPKSPQSR) is disordered.

Belongs to the SMC family. SMC1 subfamily. Forms a heterodimer with SMC3. Component of a meiosis-specific cohesin complex, probably composed of the SMC1B and SMC3 heterodimer attached via their SMC hinge domain, RAD21 (or its meiosis-specific related protein REC8), which link them, and STAG3, which interacts with RAD21 or REC8. The cohesin complex interacts with the cohesin loading complex subunits NIPBL/Scc2 (via HEAT repeats) and MAU2/Scc4. NIPBL directly contacts all members of the complex, RAD21, SMC1A/B, SMC3 and STAG1. In terms of tissue distribution, spermatocytes (at protein level). Testis and ovary specific. Not expressed in somatic cells.

The protein resides in the nucleus. Its subcellular location is the chromosome. It is found in the centromere. In terms of biological role, meiosis-specific component of cohesin complex. Required for the maintenance of meiotic cohesion, but not, or only to a minor extent, for its establishment. Contributes to axial element (AE) formation and the organization of chromatin loops along the AE. Plays a key role in synapsis, recombination and chromosome movements. The cohesin complex is required for the cohesion of sister chromatids after DNA replication. The cohesin complex apparently forms a large proteinaceous ring within which sister chromatids can be trapped. At anaphase, the complex is cleaved and dissociates from chromatin, allowing sister chromatids to segregate. The meiosis-specific cohesin complex probably replaces mitosis specific cohesin complex when it dissociates from chromatin during prophase I. In Mus musculus (Mouse), this protein is Structural maintenance of chromosomes protein 1B (Smc1b).